Here is a 2495-residue protein sequence, read N- to C-terminus: Non-reducing polyketide synthase adrD (2495 aa).

The segment at 14 to 252 is N-terminal acylcarrier protein transacylase domain (SAT); it reads VVFGPQSSEI…HHSRHVTAVQ (239 aa). The Ketosynthase family 3 (KS3) domain occupies 386–807; sequence VIPIAITGMG…GSNAALVVKQ (422 aa). Residues cysteine 551, histidine 686, and histidine 725 each act as for beta-ketoacyl synthase activity in the active site. The interval 913–1222 is malonyl-CoA:ACP transacylase (MAT) domain; sequence LCFGGQNGNE…QALDLGGALA (310 aa). Serine 1000 (for acyl/malonyl transferase activity) is an active-site residue. The tract at residues 1294-1422 is N-terminal hotdog fold; the sequence is KEFVQLLTKQ…GEISLHPFGQ (129 aa). Residues 1294–1601 form the PKS/mFAS DH domain; that stretch reads KEFVQLLTKQ…FTSVSIAGLS (308 aa). The interval 1295–1600 is product template (PT) domain; the sequence is EFVQLLTKQP…TFTSVSIAGL (306 aa). The Proton acceptor; for dehydratase activity role is filled by histidine 1325. The tract at residues 1450 to 1601 is C-terminal hotdog fold; it reads ESSGLKGFAV…FTSVSIAGLS (152 aa). The Proton donor; for dehydratase activity role is filled by aspartate 1508. The 75-residue stretch at 1651 to 1725 folds into the Carrier domain; it reads SGHFMVVQEM…TLVQTIFPDA (75 aa). Serine 1685 carries the O-(pantetheine 4'-phosphoryl)serine modification. Residues 1887-2120 are methyltransferase (CMeT) domain; it reads QHTSEHNLLR…GFQWVDWTYN (234 aa). The interval 2150–2495 is thioesterase (TE) domain; it reads YLMNEETIVY…YEFLRDHVRY (346 aa). Catalysis depends on for thioesterase activity residues serine 2273 and aspartate 2432.

The catalysed reaction is 3 malonyl-CoA + acetyl-CoA + 2 S-adenosyl-L-methionine = 3,5-dimethylorsellinate + 2 S-adenosyl-L-homocysteine + 3 CO2 + 4 CoA. It participates in secondary metabolite biosynthesis; terpenoid biosynthesis. Its function is as follows. Non-reducing polyketide synthase; part of the gene cluster that mediates the biosynthesis of andrastins, meroterpenoid compounds that exhibit inhibitory activity against ras farnesyltransferase, suggesting that they could be promising leads for antitumor agents. The first step of the pathway is the synthesis of 3,5-dimethylorsellinic acid (DMOA) by the polyketide synthase adrD via condensation of one acetyl-CoA starter unit with 3 malonyl-CoA units and 2 methylations. DMAO is then converted to farnesyl-DMAO by the prenyltransferase adrG. The methyltransferase adrK catalyzes the methylation of the carboxyl group of farnesyl-DMAO to farnesyl-DMAO methyl ester which is further converted to epoxyfarnesyl-DMAO methyl ester by the FAD-dependent monooxygenase adrH. The terpene cyclase adrI then catalyzes the carbon skeletal rearrangement to generate the andrastin E, the first compound in the pathway having the andrastin scaffold, with the tetracyclic ring system. The post-cyclization tailoring enzymes adrF, adrE, adrJ, and adrA, are involved in the conversion of andrastin E into andrastin A. The short chain dehydrogenase adrF is responsible for the oxidation of the C-3 a hydroxyl group of andrastin E to yield the corresponding ketone, andrastin D. The ketoreductase adrE stereoselectively reduces the carbonyl moiety to reverse the stereochemistry of the C-3 position to yield andrastin F. The acetyltransferase adrJ is the acetyltransferase that attaches the acetyl group to the C-3 hydroxyl group of andrastin F to yield andrastin C. Finally, the cytochrome P450 monooxygenase adrA catalyzes two sequential oxidation reactions of the C-23 methyl group, to generate the corresponding alcohol andrastin B, and aldehyde andrastin A. This Penicillium roqueforti protein is Non-reducing polyketide synthase adrD.